We begin with the raw amino-acid sequence, 124 residues long: Glycine cleavage system H protein (124 aa).

The Lipoyl-binding domain occupies 24-106 (TYTMGITDHA…YDDGWLVKFK (83 aa)). K65 carries the post-translational modification N6-lipoyllysine.

This sequence belongs to the GcvH family. In terms of assembly, the glycine cleavage system is composed of four proteins: P, T, L and H. (R)-lipoate serves as cofactor.

Functionally, the glycine cleavage system catalyzes the degradation of glycine. The H protein shuttles the methylamine group of glycine from the P protein to the T protein. The chain is Glycine cleavage system H protein from Ruthia magnifica subsp. Calyptogena magnifica.